A 490-amino-acid chain; its full sequence is Cytochrome P450 71A22 (490 aa).

The chain crosses the membrane as a helical span at residues E2–I22. C432 is a heme binding site.

Belongs to the cytochrome P450 family. It depends on heme as a cofactor.

It is found in the membrane. This is Cytochrome P450 71A22 (CYP71A22) from Arabidopsis thaliana (Mouse-ear cress).